A 72-amino-acid polypeptide reads, in one-letter code: UPF0270 protein ESA_04379 (72 aa).

It belongs to the UPF0270 family.

The polypeptide is UPF0270 protein ESA_04379 (Cronobacter sakazakii (strain ATCC BAA-894) (Enterobacter sakazakii)).